The sequence spans 255 residues: Putative enoyl-CoA hydratase/isomerase YhaR (255 aa).

The next 2 membrane-spanning stretches (helical) occupy residues 96–116 (VTIA…ALCA) and 126–146 (VLAM…HYLL).

Belongs to the enoyl-CoA hydratase/isomerase family.

The protein resides in the cell membrane. This Bacillus subtilis (strain 168) protein is Putative enoyl-CoA hydratase/isomerase YhaR (yhaR).